A 1043-amino-acid polypeptide reads, in one-letter code: Protein translocase subunit SecA (1043 aa).

Residues Gln-143, 161 to 165 (GEGKT), and Asp-665 contribute to the ATP site. Residues 980–1005 (ATAAPAAETTTTAKAADAARQQPPAA) are compositionally biased toward low complexity. The interval 980-1043 (ATAAPAAETT…KYKHCHGRNA (64 aa)) is disordered. The segment covering 1008–1022 (EEQKRQPVHVEKTPG) has biased composition (basic and acidic residues). Residues Cys-1027, Cys-1029, Cys-1038, and His-1039 each contribute to the Zn(2+) site. Positions 1033-1043 (KKYKHCHGRNA) are enriched in basic residues.

The protein belongs to the SecA family. Monomer and homodimer. Part of the essential Sec protein translocation apparatus which comprises SecA, SecYEG and auxiliary proteins SecDF. Other proteins may also be involved. Requires Zn(2+) as cofactor.

The protein localises to the cell inner membrane. Its subcellular location is the cytoplasm. It catalyses the reaction ATP + H2O + cellular proteinSide 1 = ADP + phosphate + cellular proteinSide 2.. In terms of biological role, part of the Sec protein translocase complex. Interacts with the SecYEG preprotein conducting channel. Has a central role in coupling the hydrolysis of ATP to the transfer of proteins into and across the cell membrane, serving as an ATP-driven molecular motor driving the stepwise translocation of polypeptide chains across the membrane. The sequence is that of Protein translocase subunit SecA from Chloroherpeton thalassium (strain ATCC 35110 / GB-78).